Consider the following 487-residue polypeptide: Probable nuclear hormone receptor HR3 (487 aa).

Residues 48-123 (IIPCKVCGDK…LGMSRDAVKF (76 aa)) constitute a DNA-binding region (nuclear receptor). 2 consecutive NR C4-type zinc fingers follow at residues 51–71 (CKVCGDKSSGVHYGVITCEGC) and 87–111 (CPRNKQCVVDRVNRNRCQYCRLQKC). Positions 145 to 176 (MRAQSDAAPDSSVYDTQTPSSSDQLHHNNYNS) are disordered. Residues 157–167 (VYDTQTPSSSD) show a composition bias toward polar residues. Residues 237–480 (INDVLIKTLA…PALYKELFSI (244 aa)) enclose the NR LBD domain.

This sequence belongs to the nuclear hormone receptor family. NR1 subfamily.

It is found in the nucleus. Its function is as follows. Putative receptor whose ligand is not yet known. The protein is Probable nuclear hormone receptor HR3 of Drosophila melanogaster (Fruit fly).